We begin with the raw amino-acid sequence, 355 residues long: UDP-N-acetylglucosamine--N-acetylmuramyl-(pentapeptide) pyrophosphoryl-undecaprenol N-acetylglucosamine transferase (355 aa).

UDP-N-acetyl-alpha-D-glucosamine contacts are provided by arginine 166, serine 196, and glutamine 290.

Belongs to the glycosyltransferase 28 family. MurG subfamily.

The protein localises to the cell membrane. The catalysed reaction is Mur2Ac(oyl-L-Ala-gamma-D-Glu-L-Lys-D-Ala-D-Ala)-di-trans,octa-cis-undecaprenyl diphosphate + UDP-N-acetyl-alpha-D-glucosamine = beta-D-GlcNAc-(1-&gt;4)-Mur2Ac(oyl-L-Ala-gamma-D-Glu-L-Lys-D-Ala-D-Ala)-di-trans,octa-cis-undecaprenyl diphosphate + UDP + H(+). It participates in cell wall biogenesis; peptidoglycan biosynthesis. In terms of biological role, cell wall formation. Catalyzes the transfer of a GlcNAc subunit on undecaprenyl-pyrophosphoryl-MurNAc-pentapeptide (lipid intermediate I) to form undecaprenyl-pyrophosphoryl-MurNAc-(pentapeptide)GlcNAc (lipid intermediate II). The polypeptide is UDP-N-acetylglucosamine--N-acetylmuramyl-(pentapeptide) pyrophosphoryl-undecaprenol N-acetylglucosamine transferase (Staphylococcus haemolyticus (strain JCSC1435)).